Here is a 194-residue protein sequence, read N- to C-terminus: Lectin-C (194 aa).

The signal sequence occupies residues 1 to 26; sequence MKRSNSIAVMLVLVLSSLMLLLPVEG. The propeptide at 27–44 is removed in mature form; sequence QGHEGHGVGEILLMGKLG. 3 consecutive Chitin-binding type-1 domains span residues 45–86, 87–127, and 128–168; these read APVC…QCDY, NRCG…QCSY, and WRCG…QCDL. 12 cysteine pairs are disulfide-bonded: C48–C63, C57–C69, C62–C76, C80–C84, C89–C104, C98–C110, C103–C117, C121–C125, C130–C145, C139–C151, C144–C158, and C162–C166. The propeptide at 171–194 is removed in mature form; it reads LLPSPLRRIIAIRKLKANLANMLS.

In terms of assembly, homodimer. The homodimers are asymmetric; formed in a 'head-to-tail' fashion via hydrophobic interactions between aromatic residues of the carbohydrate-binding sites of each subunit.

Functionally, N-acetyl-D-glucosamine binding lectin. Almost no hemagglutinating activity towards human erythrocytes. Low mitogenic activity towards human peripheral blood lymphocytes. This is Lectin-C from Phytolacca americana (American pokeweed).